The following is a 357-amino-acid chain: 3-dehydroquinate synthase (357 aa).

Residues 69–74 (DGEQFK), 103–107 (GVVGD), 127–128 (TT), lysine 140, lysine 149, and 167–170 (CLQT) contribute to the NAD(+) site. Glutamate 182, histidine 245, and histidine 262 together coordinate Zn(2+).

This sequence belongs to the sugar phosphate cyclases superfamily. Dehydroquinate synthase family. It depends on Co(2+) as a cofactor. The cofactor is Zn(2+). NAD(+) is required as a cofactor.

The protein localises to the cytoplasm. The enzyme catalyses 7-phospho-2-dehydro-3-deoxy-D-arabino-heptonate = 3-dehydroquinate + phosphate. Its pathway is metabolic intermediate biosynthesis; chorismate biosynthesis; chorismate from D-erythrose 4-phosphate and phosphoenolpyruvate: step 2/7. Catalyzes the conversion of 3-deoxy-D-arabino-heptulosonate 7-phosphate (DAHP) to dehydroquinate (DHQ). The sequence is that of 3-dehydroquinate synthase from Idiomarina loihiensis (strain ATCC BAA-735 / DSM 15497 / L2-TR).